The primary structure comprises 153 residues: MNVGVAHSEVNPNTRVMSSRGIWLAYVISVAALHVILLSIPFFSIPVVWTLTNVIHNLVMYLLLHTVKGTPFETPDQGKDRLLTHWEQIDYGMQCTSSRKFLSISPVVLYLLTSFYIKYDPAHFMINTASLLSVLLPKLPQFHGVRVFGINKY.

At 1–21 (MNVGVAHSEVNPNTRVMSSRG) the chain is on the cytoplasmic side. Helical transmembrane passes span 22-42 (IWLA…SIPF) and 43-63 (FSIP…MYLL). Over 64 to 105 (LHTVKGTPFETPDQGKDRLLTHWEQIDYGMQCTSSRKFLSIS) the chain is Cytoplasmic. Residues 106-126 (PVVLYLLTSFYIKYDPAHFMI) traverse the membrane as a helical segment. Topologically, residues 127-153 (NTASLLSVLLPKLPQFHGVRVFGINKY) are extracellular.

This sequence belongs to the ORM family. As to quaternary structure, ceramide-sensitive subunit of the serine palmitoyltransferase (SPT) complex, which is also composed of SPTLC1, SPTLC2/3 and SPTSSA/B.

It localises to the endoplasmic reticulum membrane. Its function is as follows. Plays an essential role in the homeostatic regulation of sphingolipid de novo biosynthesis by modulating the activity of the serine palmitoyltransferase (SPT) in response to ceramide levels. When complexed to SPT, the binding of ceramides to its N-terminus stabilizes a conformation that block SPT substrate entry, hence preventing SPT catalytic activity. Through this mechanism, maintains ceramide levels at sufficient concentrations for the production of complex sphingolipids, but which prevents the accumulation of ceramides to levels that trigger apoptosis. The sequence is that of ORM1-like protein 2 (ORMDL2) from Gallus gallus (Chicken).